A 729-amino-acid polypeptide reads, in one-letter code: DNA topoisomerase 3 (729 aa).

The region spanning 3–136 is the Toprim domain; the sequence is KSVVIAEKPS…IKRLWISSVT (134 aa). E9 and D105 together coordinate Mg(2+). The Topo IA-type catalytic domain maps to 153–594; that stretch reads YDNLYASAVA…EMKNYTKEIV (442 aa). The segment at 187–192 is interaction with DNA; the sequence is NCGRVQ. Y310 acts as the O-(5'-phospho-DNA)-tyrosine intermediate in catalysis. Positions 686-713 are enriched in basic and acidic residues; that stretch reads ERRKKESGNKADKRDVQKYMKQQKKEEE. The disordered stretch occupies residues 686-718; the sequence is ERRKKESGNKADKRDVQKYMKQQKKEEEPLNNP.

Belongs to the type IA topoisomerase family. Mg(2+) serves as cofactor.

It catalyses the reaction ATP-independent breakage of single-stranded DNA, followed by passage and rejoining.. Its function is as follows. Releases the supercoiling and torsional tension of DNA, which is introduced during the DNA replication and transcription, by transiently cleaving and rejoining one strand of the DNA duplex. Introduces a single-strand break via transesterification at a target site in duplex DNA. The scissile phosphodiester is attacked by the catalytic tyrosine of the enzyme, resulting in the formation of a DNA-(5'-phosphotyrosyl)-enzyme intermediate and the expulsion of a 3'-OH DNA strand. The free DNA strand then undergoes passage around the unbroken strand, thus removing DNA supercoils. Finally, in the religation step, the DNA 3'-OH attacks the covalent intermediate to expel the active-site tyrosine and restore the DNA phosphodiester backbone. The sequence is that of DNA topoisomerase 3 from Bacillus thuringiensis subsp. konkukian (strain 97-27).